The sequence spans 73 residues: Heterin-2 (73 aa).

A signal peptide spans 1-22; the sequence is MQYKTFLVIFLAYLLVTEEALA. Residues 47–73 constitute a propeptide that is removed on maturation; it reads KRALKNIFDPYQKNLDLELERLLSQLQ.

It belongs to the non-disulfide-bridged peptide (NDBP) superfamily. Medium-length antimicrobial peptide (group 3) family. Expressed by the venom gland.

Its subcellular location is the secreted. The protein resides in the target cell membrane. Functionally, amphipathic peptide with potent activities against Gram-positive bacteria (MIC=5.6-30.0 uM) and weaker activities against the tested Gram-negative bacteria (MIC=15 uM to &gt;45 uM). It has high hemolytic activity against human erythrocytes. May act by disrupting the integrity of the bacterial cell membrane. The sequence is that of Heterin-2 from Heterometrus spinifer (Asia giant forest scorpion).